The following is a 582-amino-acid chain: ATP-dependent lipid A-core flippase (582 aa).

The next 5 helical transmembrane spans lie at 25 to 45, 69 to 89, 137 to 159, 253 to 273, and 275 to 295; these read AGLI…TFML, LAVI…SYCI, ASSS…LFIM, PIIQ…ASFP, and VMET…IALM. Residues 28–310 form the ABC transmembrane type-1 domain; that stretch reads IVAAIALILN…LTNVNTQFQR (283 aa). The region spanning 342 to 578 is the ABC transporter domain; that stretch reads IEFRHVTFYY…QGVYAQLNRM (237 aa). ATP is bound at residue 376–383; the sequence is GRSGSGKS.

It belongs to the ABC transporter superfamily. Lipid exporter (TC 3.A.1.106) family. Homodimer.

It is found in the cell inner membrane. The enzyme catalyses ATP + H2O + lipid A-core oligosaccharideSide 1 = ADP + phosphate + lipid A-core oligosaccharideSide 2.. In terms of biological role, involved in lipopolysaccharide (LPS) biosynthesis. Translocates lipid A-core from the inner to the outer leaflet of the inner membrane. Transmembrane domains (TMD) form a pore in the inner membrane and the ATP-binding domain (NBD) is responsible for energy generation. This chain is ATP-dependent lipid A-core flippase, found in Yersinia pestis bv. Antiqua (strain Antiqua).